We begin with the raw amino-acid sequence, 1248 residues long: Bifunctional autolysin (1248 aa).

A signal peptide spans 1–29 (MAKKFNYKLPSMVALTLVGSAVTAHQVQA). The interval 103-134 (GDTRANQSATTNNTQPVAKSTSTTAPKTNTNV) is disordered. Residues 191 to 767 (ASAQPRSVAA…AVAQPKTAVK (577 aa)) form an N-acetylmuramoyl-L-alanine amidase region. 7 GW domains span residues 435–509 (TVAA…YNTA), 511–585 (SPVN…DTAK), 604–678 (TVSS…YNNA), 680–754 (SPVN…VPAA), 776–851 (TTQT…VQNL), 853–928 (KEVK…APTA), and 935–1009 (AAKD…KELI). The tract at residues 768–1248 (AYTVTKPQTT…GKYFDIPQYK (481 aa)) is endo-beta-N-acetylglucosaminidase.

It in the N-terminal section; belongs to the N-acetylmuramoyl-L-alanine amidase 2 family. The protein in the C-terminal section; belongs to the glycosyl hydrolase 73 family. In terms of assembly, oligomer; forms a ring structure at the cell surface which is important for efficient partitioning of daughter cells after cell division. Undergoes proteolytic processing to generate the two extracellular lytic enzymes, probably at the septal region on the cell surface.

The protein localises to the secreted. It carries out the reaction Hydrolyzes the link between N-acetylmuramoyl residues and L-amino acid residues in certain cell-wall glycopeptides.. The catalysed reaction is an N(4)-(oligosaccharide-(1-&gt;3)-[oligosaccharide-(1-&gt;6)]-beta-D-Man-(1-&gt;4)-beta-D-GlcNAc-(1-&gt;4)-alpha-D-GlcNAc)-L-asparaginyl-[protein] + H2O = an oligosaccharide-(1-&gt;3)-[oligosaccharide-(1-&gt;6)]-beta-D-Man-(1-&gt;4)-D-GlcNAc + N(4)-(N-acetyl-beta-D-glucosaminyl)-L-asparaginyl-[protein]. Endohydrolysis of the di-N-acetylchitobiosyl unit in high-mannose glycopeptides and glycoproteins containing the -[(Man)5(GlcNAc)2]-Asn structure. One N-acetyl-D-glucosamine residue remains attached to the protein; the rest of the oligosaccharide is released intact. Cleaves the peptidoglycan connecting the daughter cells at the end of the cell division cycle, resulting in the separation of the two newly divided cells. Acts as an autolysin in penicillin-induced lysis. The sequence is that of Bifunctional autolysin (atl) from Staphylococcus aureus (strain Mu50 / ATCC 700699).